Here is a 365-residue protein sequence, read N- to C-terminus: Galactoside alpha-(1,2)-fucosyltransferase 1 (365 aa).

Topologically, residues 1-8 (MWPLSHRH) are cytoplasmic. A helical; Signal-anchor for type II membrane protein membrane pass occupies residues 9-25 (LCLAFLLVCVLSAISFF). Residues 26 to 365 (LHIYQDSIRH…LSPLWTLAEP (340 aa)) lie on the Lumenal side of the membrane. N-linked (GlcNAc...) asparagine glycosylation is found at Asn65, Asn301, and Asn327.

It belongs to the glycosyltransferase 11 family.

The protein localises to the golgi apparatus. It localises to the golgi stack membrane. The enzyme catalyses a beta-D-galactosyl-(1-&gt;4)-N-acetyl-beta-D-glucosaminyl derivative + GDP-beta-L-fucose = an alpha-L-Fuc-(1-&gt;2)-beta-D-Gal-(1-&gt;4)-beta-D-GlcNAc derivative + GDP + H(+). The catalysed reaction is a ganglioside GA1 + GDP-beta-L-fucose = a ganglioside Fuc-GA1 + GDP + H(+). It carries out the reaction a beta-D-Gal-(1-&gt;3)-beta-D-GlcNAc-(1-&gt;3)-beta-D-Gal-(1-&gt;4)-beta-D-Glc-(1&lt;-&gt;1')-Cer(d18:1(4E)) + GDP-beta-L-fucose = alpha-L-fucosyl-(1-&gt;2)- beta-D-galactosyl-(1-&gt;3)-N-acetyl-beta-D-glucosaminyl-(1-&gt;3)-beta-D-galactosyl-(1-&gt;4)-beta-D-glucosyl-(1&lt;-&gt;1')-N-acylsphing-4-enine + GDP + H(+). It catalyses the reaction a neolactoside nLc4Cer(d18:1(4E)) + GDP-beta-L-fucose = a neolactoside IV(2)-alpha-Fuc-nLc4Cer(d18:1(4E)) + GDP + H(+). The enzyme catalyses a ganglioside GM1 + GDP-beta-L-fucose = a ganglioside Fuc-GM1 + GDP + H(+). The catalysed reaction is beta-D-galactosyl-(1-&gt;3)-N-acetyl-D-galactosamine + GDP-beta-L-fucose = alpha-L-fucosyl-(1-&gt;2)-beta-D-galactosyl-(1-&gt;3)-N-acetyl-D-galactosamine + GDP + H(+). The protein operates within protein modification; protein glycosylation. Its function is as follows. Catalyzes the transfer of L-fucose, from a guanosine diphosphate-beta-L-fucose, to the terminal galactose residue of glycoconjugates through an alpha(1,2) linkage leading to H antigen synthesis that is an intermediate substrate in the synthesis of ABO blood group antigens. H antigen is essential for maturation of the glomerular layer of the main olfactory bulb, in cell migration and early cell-cell contacts during tumor associated angiogenesis. Preferentially fucosylates soluble lactose and to a lesser extent fucosylates glycolipids gangliosides GA1 and GM1a. This Mico humeralifer (Black and white tassel-ear marmoset) protein is Galactoside alpha-(1,2)-fucosyltransferase 1.